Consider the following 106-residue polypeptide: Insulin-like peptide 03 (106 aa).

The first 18 residues, 1-18 (MLFYFGLAVIFLIDSSQT), serve as a signal peptide directing secretion. Residues 19–34 (QTLYKVNEVGGSQVDR) constitute a propeptide that is removed on maturation. Disulfide bonds link C37–C93, C49–C106, and C92–C97. Residues 52 to 82 (KKRQNIPRKYGRDPNNILEKEEFAKRFLRVR) constitute a propeptide, c peptide.

It belongs to the insulin family.

The protein localises to the secreted. Functionally, insulin decreases blood glucose concentration. May have evolved to activate insulin receptors (INSR) in vertebrates. Molecular docking studies reveals unique interaction with the human insulin receptor. In vivo, insulin-like peptide injection reduces blood glucose levels in two models of zebrafish diabetes (streptozotocin- and glucose-induced). Also shorter swimming distance of zebrafish larvae, an effect which is not observed with human insulin. The sequence is that of Insulin-like peptide 03 from Exaiptasia diaphana (Tropical sea anemone).